The sequence spans 130 residues: Large ribosomal subunit protein bL17 (130 aa).

Belongs to the bacterial ribosomal protein bL17 family. As to quaternary structure, part of the 50S ribosomal subunit. Contacts protein L32.

This is Large ribosomal subunit protein bL17 from Shewanella halifaxensis (strain HAW-EB4).